The primary structure comprises 248 residues: Adenosylcobinamide-GDP ribazoletransferase (248 aa).

A run of 8 helical transmembrane segments spans residues 24 to 44 (EVNL…IGAW), 47 to 67 (LVFT…AGLF), 70 to 90 (IIIT…GLFS), 106 to 126 (VGAN…ALFL), 134 to 154 (IGWL…LLFA), 165 to 185 (LGSI…LFVL), 186 to 206 (FILG…VILF), and 228 to 248 (AGGQ…WGLI).

It belongs to the CobS family. The cofactor is Mg(2+).

It is found in the cell membrane. The catalysed reaction is alpha-ribazole + adenosylcob(III)inamide-GDP = adenosylcob(III)alamin + GMP + H(+). It catalyses the reaction alpha-ribazole 5'-phosphate + adenosylcob(III)inamide-GDP = adenosylcob(III)alamin 5'-phosphate + GMP + H(+). Its pathway is cofactor biosynthesis; adenosylcobalamin biosynthesis; adenosylcobalamin from cob(II)yrinate a,c-diamide: step 7/7. Joins adenosylcobinamide-GDP and alpha-ribazole to generate adenosylcobalamin (Ado-cobalamin). Also synthesizes adenosylcobalamin 5'-phosphate from adenosylcobinamide-GDP and alpha-ribazole 5'-phosphate. In Listeria welshimeri serovar 6b (strain ATCC 35897 / DSM 20650 / CCUG 15529 / CIP 8149 / NCTC 11857 / SLCC 5334 / V8), this protein is Adenosylcobinamide-GDP ribazoletransferase.